A 110-amino-acid chain; its full sequence is Integration host factor subunit alpha (110 aa).

Belongs to the bacterial histone-like protein family. Heterodimer of an alpha and a beta chain.

Its function is as follows. This protein is one of the two subunits of integration host factor, a specific DNA-binding protein that functions in genetic recombination as well as in transcriptional and translational control. The polypeptide is Integration host factor subunit alpha (Methylococcus capsulatus (strain ATCC 33009 / NCIMB 11132 / Bath)).